The following is a 480-amino-acid chain: Gamma-aminobutyric acid receptor subunit rho-1 (480 aa).

Residues 1–21 (MLAVQNMKFGIFLLWWGWVLA) form the signal peptide. Topologically, residues 22-281 (AESTAHWPGR…LYINFTLRRH (260 aa)) are extracellular. Residues 29–38 (PGREVHEPSR) show a composition bias toward basic and acidic residues. The segment at 29-67 (PGREVHEPSRKGSRPQRQRRGAHDDAHKQGSPILRRSSD) is disordered. Over residues 39–48 (KGSRPQRQRR) the composition is skewed to basic residues. Residue Arg-126 coordinates 4-aminobutanoate. The N-linked (GlcNAc...) asparagine glycan is linked to Asn-141. Ser-190 is a binding site for 4-aminobutanoate. The cysteines at positions 199 and 213 are disulfide-linked. Glu-218 is a 4-aminobutanoate binding site. 2 N-linked (GlcNAc...) asparagine glycosylation sites follow: Asn-235 and Asn-275. Residues 282–302 (IFFFLLQTYFPATLMVMLSWV) form a helical membrane-spanning segment. Residues 303–314 (SFWIDRRAVPAR) lie on the Cytoplasmic side of the membrane. Residues 315–335 (VPLGITTVLTMSTIITGVNAS) traverse the membrane as a helical segment. Residues 336 to 346 (MPRVSYIKAVD) lie on the Extracellular side of the membrane. Residues 347–367 (IYLWVSFVFVFLSVLEYAAVN) traverse the membrane as a helical segment. The Cytoplasmic segment spans residues 368-458 (YLTTVQERKE…MRINTHAIDK (91 aa)). Residues 459–479 (YSRIIFPAAYILFNLIYWSIF) form a helical membrane-spanning segment. Position 480 (Ser-480) is a topological domain, extracellular.

This sequence belongs to the ligand-gated ion channel (TC 1.A.9) family. Gamma-aminobutyric acid receptor (TC 1.A.9.5) subfamily. GABRR1 sub-subfamily. Three rho subunits (rho-1/GBRR1, rho-2/GBRR2 and rho-3/GBRR3) coassemble either to form functional homopentamers or heteropentamers. Rho-1/GBRR1 subunits can also associate with alpha-1/GBRA1 subunits to form a functional GABAAR. Interacts with SQSTM1. Expressed in the cerebellum.

It is found in the postsynaptic cell membrane. The protein resides in the cell membrane. The catalysed reaction is chloride(in) = chloride(out). Inhibited by TPMPA, a rho-specific antagonist, when forming a homopentamer. In contrast with other GABAARs, rho-1 GABAAR is not inhibited by bicuculline when forming a homopentamer. Functionally, rho subunit of the pentameric ligand-gated chloride channels responsible for mediating the effects of gamma-aminobutyric acid (GABA), the major inhibitory neurotransmitter in the brain. Rho-containing GABA-gated chloride channels are a subclass of GABA(A) receptors (GABAARs) entirely composed of rho subunits, where GABA molecules bind at the rho intersubunit interfaces. When activated by GABA, rho-GABAARs selectively allow the flow of chloride anions across the cell membrane down their electrochemical gradient. Rho-1 subunits are primarily expressed in retina where rho-1-containing GABAARs play a role in retinal neurotransmission. Rho-1 GABAARs are also involved in neuronal tonic (extrasynaptic) and phasic (synaptic) transmission in the Purkinje neurons of the cerebellum. Rho-1 GABAARs may also contribute to the regulation of glial development in the cerebellum by controlling extrasynaptic transmission. This is Gamma-aminobutyric acid receptor subunit rho-1 from Mus musculus (Mouse).